Reading from the N-terminus, the 339-residue chain is MLPSAVAAHAGAYWDVVASSALLNLPAAPGFGNLGKSFLIENLLRVGGAPTPRLQPPAPHDPATALATAGAQLRPLPASPVPLKLCPAAEQVSPAGAPYGTRWAFQVLSPSADSARLPGRAPGDRDCTFQPSAPAPSKPFLLSTPPFYSACCGGSCRRPASSTAFPREESMLPLLTQDSNSKARRGILRRAVFSEDQRKALEKMFQKQKYISKTDRKKLAINLGLKESQVKIWFQNRRMKWRNSKEKEVLSNRCIQEVGLQEDPLSRSALGFPSPCPSIWDVPQQHSSPRWRENSPEPSERLIQESSGAPPPEANSLQGALYLCSEEEAGSKGVLTGAV.

A DNA-binding region (homeobox) is located at residues 186 to 245 (GILRRAVFSEDQRKALEKMFQKQKYISKTDRKKLAINLGLKESQVKIWFQNRRMKWRNSK). Residues 282–318 (VPQQHSSPRWRENSPEPSERLIQESSGAPPPEANSLQ) form a disordered region. A compositionally biased stretch (basic and acidic residues) spans 290–303 (RWRENSPEPSERLI).

This sequence belongs to the H2.0 homeobox family.

The protein localises to the nucleus. In Homo sapiens (Human), this protein is Homeobox protein DBX2 (DBX2).